The sequence spans 75 residues: DNA-directed RNA polymerase subunit omega (75 aa).

Belongs to the RNA polymerase subunit omega family. In cyanobacteria the RNAP catalytic core is composed of 2 alpha, 1 beta, 1 beta', 1 gamma and 1 omega subunit. When a sigma factor is associated with the core the holoenzyme is formed, which can initiate transcription.

The catalysed reaction is RNA(n) + a ribonucleoside 5'-triphosphate = RNA(n+1) + diphosphate. Functionally, promotes RNA polymerase assembly. Latches the N- and C-terminal regions of the beta' subunit thereby facilitating its interaction with the beta and alpha subunits. The polypeptide is DNA-directed RNA polymerase subunit omega (Prochlorococcus marinus (strain MIT 9211)).